A 243-amino-acid polypeptide reads, in one-letter code: Ubiquinone/menaquinone biosynthesis C-methyltransferase UbiE (243 aa).

S-adenosyl-L-methionine contacts are provided by residues T69, D90, and 116–117 (DA).

Belongs to the class I-like SAM-binding methyltransferase superfamily. MenG/UbiE family.

It catalyses the reaction a 2-demethylmenaquinol + S-adenosyl-L-methionine = a menaquinol + S-adenosyl-L-homocysteine + H(+). The catalysed reaction is a 2-methoxy-6-(all-trans-polyprenyl)benzene-1,4-diol + S-adenosyl-L-methionine = a 5-methoxy-2-methyl-3-(all-trans-polyprenyl)benzene-1,4-diol + S-adenosyl-L-homocysteine + H(+). It participates in quinol/quinone metabolism; menaquinone biosynthesis; menaquinol from 1,4-dihydroxy-2-naphthoate: step 2/2. It functions in the pathway cofactor biosynthesis; ubiquinone biosynthesis. Methyltransferase required for the conversion of demethylmenaquinol (DMKH2) to menaquinol (MKH2) and the conversion of 2-polyprenyl-6-methoxy-1,4-benzoquinol (DDMQH2) to 2-polyprenyl-3-methyl-6-methoxy-1,4-benzoquinol (DMQH2). The protein is Ubiquinone/menaquinone biosynthesis C-methyltransferase UbiE of Cupriavidus metallidurans (strain ATCC 43123 / DSM 2839 / NBRC 102507 / CH34) (Ralstonia metallidurans).